A 385-amino-acid chain; its full sequence is Mannitol-1-phosphate 5-dehydrogenase (385 aa).

NAD(+) is bound at residue 3–14; sequence ALQFGAGNIGRG.

The protein belongs to the mannitol dehydrogenase family.

The enzyme catalyses D-mannitol 1-phosphate + NAD(+) = beta-D-fructose 6-phosphate + NADH + H(+). This chain is Mannitol-1-phosphate 5-dehydrogenase, found in Buchnera aphidicola subsp. Acyrthosiphon pisum (strain 5A).